The chain runs to 559 residues: 2-isopropylmalate synthase (559 aa).

One can recognise a Pyruvate carboxyltransferase domain in the interval proline 30–lysine 304. Mg(2+) is bound by residues aspartate 39, histidine 243, histidine 245, and asparagine 279. The interval valine 436–serine 559 is regulatory domain.

It belongs to the alpha-IPM synthase/homocitrate synthase family. LeuA type 2 subfamily. In terms of assembly, homodimer. The cofactor is Mg(2+).

It is found in the cytoplasm. The enzyme catalyses 3-methyl-2-oxobutanoate + acetyl-CoA + H2O = (2S)-2-isopropylmalate + CoA + H(+). It participates in amino-acid biosynthesis; L-leucine biosynthesis; L-leucine from 3-methyl-2-oxobutanoate: step 1/4. In terms of biological role, catalyzes the condensation of the acetyl group of acetyl-CoA with 3-methyl-2-oxobutanoate (2-ketoisovalerate) to form 3-carboxy-3-hydroxy-4-methylpentanoate (2-isopropylmalate). The polypeptide is 2-isopropylmalate synthase (Alcanivorax borkumensis (strain ATCC 700651 / DSM 11573 / NCIMB 13689 / SK2)).